Consider the following 404-residue polypeptide: Zinc transporter 10 (404 aa).

The first 22 residues, 1-22, serve as a signal peptide directing secretion; the sequence is MESSSSSSYIPFIRQIAASVSA. Topologically, residues 23 to 49 are extracellular; that stretch reads ASCDAVVGGGGDKDEECRDEAAALRLK. The chain crosses the membrane as a helical span at residues 50–70; that stretch reads MVAVAAILIAGAAGVAIPLVG. Over 71–86 the chain is Cytoplasmic; sequence RRRRGGGGGGGGGASS. Residues 87-107 traverse the membrane as a helical segment; sequence GGLFVLAKAFAAGVILATGFV. At 108 to 129 the chain is on the extracellular side; sequence HMLHDAEHALSNPCLPHSPWRR. A helical transmembrane segment spans residues 130-150; that stretch reads FPFPGFVAMLAALATLVVDFV. Over 151–248 the chain is Cytoplasmic; the sequence is GTHFYERKHR…GHEEGPSARH (98 aa). Residues 249-269 traverse the membrane as a helical segment; sequence VVVSQILELGIVSHSVIIGLS. Over 270-280 the chain is Extracellular; that stretch reads LGVSQSPCTIK. Residues 281-301 form a helical membrane-spanning segment; that stretch reads PLVAALSFHQFFEGFALGGCI. The Cytoplasmic segment spans residues 302-311; sequence SEAQLKNFSA. A helical transmembrane segment spans residues 312–332; the sequence is FLMAFFFAITTPAGITVGAAV. Topologically, residues 333–343 are extracellular; it reads ASFYNPNSPRA. Residues 344 to 364 traverse the membrane as a helical segment; that stretch reads LVVEGILDSMSAGILIYMALV. The Cytoplasmic segment spans residues 365–383; sequence DLIAADFLSRKMSCNPRLQ. The chain crosses the membrane as a helical span at residues 384-404; it reads VGSYIALFLGAMAMAALALWA.

Belongs to the ZIP transporter (TC 2.A.5) family.

The protein localises to the cell membrane. Its function is as follows. Zinc transporter that may be involved in zinc uptake from the rhizosphere. This chain is Zinc transporter 10 (ZIP10), found in Oryza sativa subsp. japonica (Rice).